Consider the following 280-residue polypeptide: Probable cell division protein WhiA (280 aa).

The H-T-H motif DNA-binding region spans 247–279 (SLEQIANFFFTKYNIKISRSGIQHFSVNLKKLC).

This sequence belongs to the WhiA family.

Its function is as follows. Involved in cell division and chromosome segregation. The chain is Probable cell division protein WhiA from Mycoplasma genitalium (strain ATCC 33530 / DSM 19775 / NCTC 10195 / G37) (Mycoplasmoides genitalium).